The following is a 75-amino-acid chain: Sec-independent protein translocase protein TatA (75 aa).

The helical transmembrane segment at 1–21 (MGMPSMPELLIVLAIVVLLFG) threads the bilayer. The segment at 47–75 (DEEEEVKEITKKEEPKVEAAAEEKKSENA) is disordered. Residues 53–75 (KEITKKEEPKVEAAAEEKKSENA) show a composition bias toward basic and acidic residues.

This sequence belongs to the TatA/E family. In terms of assembly, the Tat system comprises two distinct complexes: a TatABC complex, containing multiple copies of TatA, TatB and TatC subunits, and a separate TatA complex, containing only TatA subunits. Substrates initially bind to the TatABC complex, which probably triggers association of the separate TatA complex to form the active translocon.

The protein localises to the cell inner membrane. In terms of biological role, part of the twin-arginine translocation (Tat) system that transports large folded proteins containing a characteristic twin-arginine motif in their signal peptide across membranes. TatA could form the protein-conducting channel of the Tat system. The sequence is that of Sec-independent protein translocase protein TatA from Sulfurovum sp. (strain NBC37-1).